The sequence spans 261 residues: MRIDVISLFPEFIKQSVGFGVIGRAQERGLLDLHNWNPRDYAQGNYRRVDDRPFGGGPGMVMLIEPLRACLEAVRAADPQPAPLIYLSPQGVLLNQSRARKLAMLPRMILLCGRYEGIDERFIAHEVNMELSIGDYVLSGGELGAAVVVDAVTRLQEGVLNDAESAKQDSFEAADSLFDYPHYTHPSNHAFGNVPEVLRSGNHVAITRWRRQQSLLRTWLRRPDLIDEARLSKADRLLLDEIKRTHPMDTDRKASASWRGA.

Residues G113 and 133-138 contribute to the S-adenosyl-L-methionine site; that span reads IGDYVL.

It belongs to the RNA methyltransferase TrmD family. As to quaternary structure, homodimer.

The protein localises to the cytoplasm. It carries out the reaction guanosine(37) in tRNA + S-adenosyl-L-methionine = N(1)-methylguanosine(37) in tRNA + S-adenosyl-L-homocysteine + H(+). Specifically methylates guanosine-37 in various tRNAs. This chain is tRNA (guanine-N(1)-)-methyltransferase, found in Xylella fastidiosa (strain M23).